The sequence spans 92 residues: Small ribosomal subunit protein uS19 (92 aa).

This sequence belongs to the universal ribosomal protein uS19 family.

Its function is as follows. Protein S19 forms a complex with S13 that binds strongly to the 16S ribosomal RNA. The polypeptide is Small ribosomal subunit protein uS19 (Granulibacter bethesdensis (strain ATCC BAA-1260 / CGDNIH1)).